The sequence spans 416 residues: Phosphoglycerate kinase 2 (416 aa).

Substrate contacts are provided by residues 28-30, Arg-44, 65-68, Arg-122, and Arg-162; these read DMN and HQSR. Residues Glu-337 and 362 to 365 each bind ATP; that span reads GGHI.

It belongs to the phosphoglycerate kinase family. Monomer.

It is found in the cytoplasm. The enzyme catalyses (2R)-3-phosphoglycerate + ATP = (2R)-3-phospho-glyceroyl phosphate + ADP. It functions in the pathway carbohydrate degradation; glycolysis; pyruvate from D-glyceraldehyde 3-phosphate: step 2/5. The sequence is that of Phosphoglycerate kinase 2 from Methanosarcina acetivorans (strain ATCC 35395 / DSM 2834 / JCM 12185 / C2A).